A 363-amino-acid chain; its full sequence is MNKLALYCRPGFEKEVAAEITDQASHLGVFGFARVQDNSGYVIFECYQPDEADRLARDIPFNRLIFARQMMVISDLLEDLDPADRISPIVAAFEELSQQVNFAQSSELFVETADTNEAKELSTFCRKFTVPLRQALKKQGWLSAKASQKCGQFLHCFFVKPNCCYVGYSYVDNHSSHFMGIPRLKFPADAPSRSTLKLEEAILTFIPRKEENKRLNENMIGVDLGACPGGWTYQLVKRGLFVYAVDHGKMAASLHDTGCIEHCAEDGFKFQPPKRKKVDWLVCDMVEQPSRISLLIGKWLLNGWCRETIFNLKLPMKKRYQEVILCLENLAVMLAEQNLNFDIQAKHLYHDREEITVHIALKP.

S-adenosyl-L-methionine-binding positions include Ser-194, 227–230 (CPGG), Asp-246, Asp-266, and Asp-284. Lys-313 acts as the Proton acceptor in catalysis.

This sequence belongs to the class I-like SAM-binding methyltransferase superfamily. RNA methyltransferase RlmE family. RlmM subfamily. As to quaternary structure, monomer.

The protein localises to the cytoplasm. It carries out the reaction cytidine(2498) in 23S rRNA + S-adenosyl-L-methionine = 2'-O-methylcytidine(2498) in 23S rRNA + S-adenosyl-L-homocysteine + H(+). Functionally, catalyzes the 2'-O-methylation at nucleotide C2498 in 23S rRNA. In Haemophilus influenzae (strain 86-028NP), this protein is Ribosomal RNA large subunit methyltransferase M.